Here is a 713-residue protein sequence, read N- to C-terminus: Phenylalanine ammonia-lyase (713 aa).

The Proton donor/acceptor role is filled by tyrosine 116. A cross-link (5-imidazolinone (Ala-Gly)) is located at residues 217 to 219 (ASG). A 2,3-didehydroalanine (Ser) modification is found at serine 218. Asparagine 272, glutamine 362, arginine 368, asparagine 399, lysine 470, glutamate 498, and asparagine 501 together coordinate (E)-cinnamate.

Belongs to the PAL/histidase family. Homotetramer. In terms of processing, contains an active site 4-methylidene-imidazol-5-one (MIO), which is formed autocatalytically by cyclization and dehydration of residues Ala-Ser-Gly.

It is found in the cytoplasm. It carries out the reaction L-phenylalanine = (E)-cinnamate + NH4(+). The protein operates within phenylpropanoid metabolism; trans-cinnamate biosynthesis; trans-cinnamate from L-phenylalanine: step 1/1. Catalyzes the non-oxidative deamination of L-phenylalanine to form trans-cinnamic acid and a free ammonium ion. Facilitates the commitment step in phenylpropanoid pathways that produce secondary metabolites such as lignins, coumarins and flavonoids. This is Phenylalanine ammonia-lyase (PAL) from Rhodotorula mucilaginosa (Yeast).